We begin with the raw amino-acid sequence, 228 residues long: F-box protein At5g67140 (228 aa).

One can recognise an F-box domain in the interval 4–51 (EAAIDRLPLDLLAYIFSLATSFTVLAQASGVCKKWRKAVNQSMARRET).

The sequence is that of F-box protein At5g67140 from Arabidopsis thaliana (Mouse-ear cress).